The primary structure comprises 671 residues: Acetyl-coenzyme A synthetase 2 (671 aa).

CoA is bound by residues 207–210 (RGGR) and Thr326. ATP is bound by residues 402–404 (GEP), 426–431 (DTYWQT), Asp517, and Arg532. Ser540 provides a ligand contact to CoA. Arg543 is a binding site for ATP. Arg603 is a binding site for CoA.

It belongs to the ATP-dependent AMP-binding enzyme family.

It carries out the reaction acetate + ATP + CoA = acetyl-CoA + AMP + diphosphate. The chain is Acetyl-coenzyme A synthetase 2 (ACS2) from Candida albicans (strain SC5314 / ATCC MYA-2876) (Yeast).